The following is a 355-amino-acid chain: Alanine racemase (355 aa).

Lysine 34 serves as the catalytic Proton acceptor; specific for D-alanine. Lysine 34 carries the post-translational modification N6-(pyridoxal phosphate)lysine. Residue arginine 133 participates in substrate binding. Tyrosine 249 acts as the Proton acceptor; specific for L-alanine in catalysis. Methionine 297 lines the substrate pocket.

This sequence belongs to the alanine racemase family. Pyridoxal 5'-phosphate is required as a cofactor.

It carries out the reaction L-alanine = D-alanine. The protein operates within amino-acid biosynthesis; D-alanine biosynthesis; D-alanine from L-alanine: step 1/1. In terms of biological role, catalyzes the interconversion of L-alanine and D-alanine. May also act on other amino acids. The chain is Alanine racemase (alr) from Rickettsia canadensis (strain McKiel).